A 1774-amino-acid chain; its full sequence is Receptor-mediated endocytosis protein 6 homolog (1774 aa).

The Ras-GAP domain maps to 157–396 (ELLLKLLREL…EDVVAILPQQ (240 aa)). Disordered stretches follow at residues 444 to 480 (IPKQ…NNRS), 517 to 564 (PLAN…PAPT), 661 to 727 (AAHS…HHHG), 784 to 811 (ENTL…RNFS), 869 to 947 (AEID…EDSA), 983 to 1102 (ESSF…EEQP), 1115 to 1142 (QEEQ…SMEQ), and 1214 to 1342 (RAGA…GGRS). 2 stretches are compositionally biased toward low complexity: residues 519–533 (ANGQ…SASN) and 540–557 (SSHS…AAPA). Basic and acidic residues predominate over residues 674–683 (QQERDVHENE). Residues 688 to 713 (DMVSANVSGRGTPNISGRDTPSSQVT) show a composition bias toward polar residues. Positions 794-809 (RGGDRGDRGDRDRDRN) are enriched in basic and acidic residues. The span at 887 to 905 (PGSGGGAGVPEAGGGGGVV) shows a compositional bias: gly residues. Positions 929–944 (DPDRERLRNGSERSQE) are enriched in basic and acidic residues. Over residues 1011-1027 (MRRQTSAESSISNQSLN) the composition is skewed to polar residues. A compositionally biased stretch (basic residues) spans 1038–1047 (LAKHHHHHQH). Residues 1048-1060 (RDRDRDRDRDRDH) show a composition bias toward basic and acidic residues. A compositionally biased stretch (basic residues) spans 1061–1076 (REHHHKSAALKKKKHQ). Residues 1077–1087 (EHKEHQHRDLI) show a composition bias toward basic and acidic residues. Over residues 1091–1101 (DCSEDKDEEEQ) the composition is skewed to acidic residues. Over residues 1115–1125 (QEEQQQQQQQQ) the composition is skewed to low complexity. Positions 1246-1291 (SADKEQQPYRDRERERDRERDRERDRDRERDRDRDRDRDRDREHHS) are enriched in basic and acidic residues. The span at 1310–1335 (SSSSKNNAIAIAAPSSINPNPSPSSA) shows a compositional bias: low complexity. Positions 1516 to 1546 (RHRQQLLLRSEQLEQLEVRLRSEARSCQRCL) form a coiled coil. A VPS9 domain is found at 1635–1774 (VSRDTVLSAH…KFIKTMDYLD (140 aa)).

It belongs to the GAPVD1 family.

It is found in the membrane. Acts both as a GTPase-activating protein (GAP) and a guanine nucleotide exchange factor (GEF), and participates in endocytosis. This Drosophila pseudoobscura pseudoobscura (Fruit fly) protein is Receptor-mediated endocytosis protein 6 homolog.